Reading from the N-terminus, the 395-residue chain is Ribosomal RNA large subunit methyltransferase G (395 aa).

This sequence belongs to the methyltransferase superfamily. RlmG family.

Its subcellular location is the cytoplasm. The catalysed reaction is guanosine(1835) in 23S rRNA + S-adenosyl-L-methionine = N(2)-methylguanosine(1835) in 23S rRNA + S-adenosyl-L-homocysteine + H(+). Functionally, specifically methylates the guanine in position 1835 (m2G1835) of 23S rRNA. This Yersinia pseudotuberculosis serotype O:1b (strain IP 31758) protein is Ribosomal RNA large subunit methyltransferase G.